Consider the following 253-residue polypeptide: Protein C1orf43 (253 aa).

A helical membrane pass occupies residues 11 to 31; it reads VNVVLVMAYGSLVFVLLFIFV.

It localises to the membrane. It is found in the golgi apparatus. The protein resides in the mitochondrion. Functionally, general regulator of phagocytosis. Required to uptake Gram negative bacterium by macrophages. This is Protein C1orf43 (C1orf43) from Homo sapiens (Human).